A 623-amino-acid chain; its full sequence is Leucine aminopeptidase 2 (623 aa).

A peptide is bound by residues 140 to 142 (QLE) and 266 to 271 (PYGGME). Position 295 (H295) interacts with Zn(2+). Catalysis depends on E296, which acts as the Proton acceptor. Residues H299 and E318 each coordinate Zn(2+). The active-site Proton donor is the Y382.

The protein belongs to the peptidase M1 family. Zn(2+) is required as a cofactor.

It is found in the cytoplasm. The protein localises to the nucleus. It carries out the reaction an epoxide + H2O = an ethanediol. Aminopeptidase that preferentially cleaves di- and tripeptides. Also has low epoxide hydrolase activity (in vitro). Can hydrolyze the epoxide leukotriene LTA(4) but it forms preferentially 5,6-dihydroxy-7,9,11,14-eicosatetraenoic acid rather than the cytokine leukotriene B(4) as the product compared to the homologous mammalian enzyme (in vitro). This is Leucine aminopeptidase 2 from Eremothecium gossypii (strain ATCC 10895 / CBS 109.51 / FGSC 9923 / NRRL Y-1056) (Yeast).